Here is a 386-residue protein sequence, read N- to C-terminus: SWI/SNF-related matrix-associated actin-dependent regulator of chromatin subfamily B member 1 (386 aa).

Residues Met1–Ser114 form a DNA-binding region.

Belongs to the SNF5 family. In terms of assembly, component of the multiprotein chromatin-remodeling complexes SWI/SNF. Component of neural progenitors-specific chromatin remodeling complex (npBAF complex) and the neuron-specific chromatin remodeling complex (nBAF complex). Component of the BAF (SWI/SNF) chromatin remodeling complex. Component of the SWI/SNF-B (PBAF) chromatin remodeling complex. Binds to double-stranded DNA.

The protein localises to the nucleus. Its function is as follows. Involved in chromatin-remodeling. Core component of the BAF (SWI/SNF) complex. This ATP-dependent chromatin-remodeling complex plays important roles in cell proliferation and differentiation, in cellular antiviral activities and inhibition of tumor formation. Belongs to the neural progenitors-specific chromatin remodeling complex (npBAF complex) and the neuron-specific chromatin remodeling complex (nBAF complex) and may play a role in neural development. This Gallus gallus (Chicken) protein is SWI/SNF-related matrix-associated actin-dependent regulator of chromatin subfamily B member 1 (SMARCB1).